The following is a 162-amino-acid chain: uncharacterized protein (162 aa).

The 66-residue stretch at 6–71 folds into the HTH asnC-type domain; it reads LDDLDRAILK…PIKPRKLALV (66 aa). The H-T-H motif DNA-binding region spans 25–44; the sequence is IAEISNQLKKPESTVHFRIK.

This is an uncharacterized protein from Pyrococcus abyssi (strain GE5 / Orsay).